A 90-amino-acid polypeptide reads, in one-letter code: U7-theraphotoxin-Hhn1a 5 (90 aa).

The N-terminal stretch at 1-19 (MKTAIFTVVLALAVFAVLS) is a signal peptide. Positions 20-50 (FGWEANEKALSEESTELIHEKEAASETEARE) are excised as a propeptide. Cystine bridges form between C51–C65, C58–C70, and C64–C81.

Belongs to the neurotoxin 10 (Hwtx-1) family. 13 (Hntx-13) subfamily. In terms of tissue distribution, expressed by the venom gland.

It localises to the secreted. Functionally, ion channel inhibitor. The chain is U7-theraphotoxin-Hhn1a 5 from Cyriopagopus hainanus (Chinese bird spider).